The sequence spans 389 residues: Major outer membrane porin (389 aa).

The first 23 residues, Met1–Ala23, serve as a signal peptide directing secretion.

Belongs to the chlamydial porin (CP) (TC 1.B.2) family. As to quaternary structure, part of a disulfide cross-linked outer membrane complex (COMC) composed of the major outer membrane porin (MOMP), the small cysteine-rich protein (OmcA) and the large cysteine-rich periplasmic protein (OmcB).

It localises to the cell outer membrane. In elementary bodies (EBs, the infectious stage, which is able to survive outside the host cell) provides the structural integrity of the outer envelope through disulfide cross-links with the small cysteine-rich protein and the large cysteine-rich periplasmic protein. It has been described in publications as the Sarkosyl-insoluble COMC (Chlamydia outer membrane complex), and serves as the functional equivalent of peptidoglycan. Functionally, permits diffusion of specific solutes through the outer membrane. The polypeptide is Major outer membrane porin (ompA) (Chlamydia pneumoniae (Chlamydophila pneumoniae)).